The following is a 605-amino-acid chain: Elongation factor 4 (605 aa).

In terms of domain architecture, tr-type G spans 9 to 192; the sequence is SRIRNFCIIA…AIIARVPAPA (184 aa). GTP contacts are provided by residues 21–26 and 139–142; these read DHGKST and NKID.

Belongs to the TRAFAC class translation factor GTPase superfamily. Classic translation factor GTPase family. LepA subfamily.

It localises to the cell inner membrane. The catalysed reaction is GTP + H2O = GDP + phosphate + H(+). In terms of biological role, required for accurate and efficient protein synthesis under certain stress conditions. May act as a fidelity factor of the translation reaction, by catalyzing a one-codon backward translocation of tRNAs on improperly translocated ribosomes. Back-translocation proceeds from a post-translocation (POST) complex to a pre-translocation (PRE) complex, thus giving elongation factor G a second chance to translocate the tRNAs correctly. Binds to ribosomes in a GTP-dependent manner. The sequence is that of Elongation factor 4 from Chlorobium luteolum (strain DSM 273 / BCRC 81028 / 2530) (Pelodictyon luteolum).